The chain runs to 690 residues: Translation factor GUF1, mitochondrial (690 aa).

The disordered stretch occupies residues 40 to 68 (SVTVPAARRHNSTKSTNSTTSTNSTTATS). Residues 52-68 (TKSTNSTTSTNSTTATS) are compositionally biased toward low complexity. One can recognise a tr-type G domain in the interval 89 to 272 (ERYRNFCIVA…AVIKKMPAPV (184 aa)). GTP is bound by residues 98–105 (AHIDHGKS), 165–169 (DTPGH), and 219–222 (NKID).

It belongs to the TRAFAC class translation factor GTPase superfamily. Classic translation factor GTPase family. LepA subfamily.

The protein localises to the mitochondrion inner membrane. It carries out the reaction GTP + H2O = GDP + phosphate + H(+). Its function is as follows. Promotes mitochondrial protein synthesis. May act as a fidelity factor of the translation reaction, by catalyzing a one-codon backward translocation of tRNAs on improperly translocated ribosomes. Binds to mitochondrial ribosomes in a GTP-dependent manner. This Sordaria macrospora (strain ATCC MYA-333 / DSM 997 / K(L3346) / K-hell) protein is Translation factor GUF1, mitochondrial.